The sequence spans 449 residues: MKPLSLLLAVASALGTAVSAGPAVIECWMVEDAGGGRLAKKPAALLLRQGPGTPPPRPDLEPELYLKVHDPAGTLQAAVRRYPSDAPPPHCELSRFIPLPASARWARGLTPGRSCPRALDGAWLMASVLSPIFSLSCLLRPQSEPQPEPALFTSATAVLTVLTYSPIAQIQLGQDALLDLRFAYMPSISEAAASLAPGPPPFGLEWRRQHLGKGHLLLAATPGLHEQMPAAQDGAVAFAAWDDDDPWGPWTGNGTLWLPAVQPFQEGTYLATVHLPYLQGQVALELSVQKPPKISLTPAPLVWAAPGEAPPELLCLVSRFYPAKGLEVEWELRGGPEGSFQKAEGQSWLSALRHHSDGSVSLSAHLQPIPVTAKHHGARYACRVHHPTLPTLGRSAEVTLEVAGLSGPSLEDSVGLFLSAFLLLGLIKALGWVAASRSTSKDPKEKKAQ.

Positions 1–20 (MKPLSLLLAVASALGTAVSA) are cleaved as a signal peptide. Topologically, residues 21-413 (GPAVIECWMV…GLSGPSLEDS (393 aa)) are lumenal. A disulfide bridge links Cys27 with Cys91. The N-linked (GlcNAc...) asparagine glycan is linked to Asn253. In terms of domain architecture, Ig-like C1-type spans 292–399 (PKISLTPAPL…PTLGRSAEVT (108 aa)). Cys315 and Cys382 form a disulfide bridge. The helical transmembrane segment at 414–434 (VGLFLSAFLLLGLIKALGWVA) threads the bilayer. Residues 435–449 (ASRSTSKDPKEKKAQ) are Cytoplasmic-facing.

In terms of assembly, heterodimer with PDIA3; disulfide-linked. Obligatory mediator for the interaction between newly assembled MHC class I molecules, calreticulin, PDIA3 and TAP. Up to 4 MHC class I/tapasin complexes bind to 1 TAP. Interacts with HLA-G-B2M complex; this interaction is required for loading of high affinity peptides. On its own or as part of MHC class I peptide loading complex, interacts with ligand-free MR1 or MR1-B2M complex, providing for stable MR1 pools ready for metabolite antigen processing.

It localises to the endoplasmic reticulum membrane. Functionally, involved in the association of MHC class I with transporter associated with antigen processing (TAP) and in the assembly of MHC class I with peptide (peptide loading). This Canis lupus familiaris (Dog) protein is Tapasin (TAPBP).